A 301-amino-acid polypeptide reads, in one-letter code: Phosphoglycolate phosphatase 2 (301 aa).

Asp19 acts as the Nucleophile in catalysis.

Belongs to the HAD-like hydrolase superfamily. CbbY/CbbZ/Gph/YieH family.

The catalysed reaction is 2-phosphoglycolate + H2O = glycolate + phosphate. Dephosphorylates 2-phosphoglycolate, but does not contribute to photorespiratory metabolism. In Arabidopsis thaliana (Mouse-ear cress), this protein is Phosphoglycolate phosphatase 2 (PGLP2).